Here is a 403-residue protein sequence, read N- to C-terminus: S-adenosylmethionine synthase (403 aa).

His-17 serves as a coordination point for ATP. Asp-19 provides a ligand contact to Mg(2+). K(+) is bound at residue Glu-45. 2 residues coordinate L-methionine: Glu-58 and Gln-104. The flexible loop stretch occupies residues 104 to 114 (QSSDIAQGVNT). ATP is bound by residues 179–181 (DGK), 250–251 (KF), Asp-259, 265–266 (RK), Ala-282, and Lys-286. Asp-259 is a binding site for L-methionine. Lys-290 is a binding site for L-methionine.

This sequence belongs to the AdoMet synthase family. Homotetramer; dimer of dimers. Mg(2+) is required as a cofactor. K(+) serves as cofactor.

Its subcellular location is the cytoplasm. It carries out the reaction L-methionine + ATP + H2O = S-adenosyl-L-methionine + phosphate + diphosphate. It participates in amino-acid biosynthesis; S-adenosyl-L-methionine biosynthesis; S-adenosyl-L-methionine from L-methionine: step 1/1. Its function is as follows. Catalyzes the formation of S-adenosylmethionine (AdoMet) from methionine and ATP. The overall synthetic reaction is composed of two sequential steps, AdoMet formation and the subsequent tripolyphosphate hydrolysis which occurs prior to release of AdoMet from the enzyme. In Mycobacterium leprae (strain Br4923), this protein is S-adenosylmethionine synthase.